The following is a 339-amino-acid chain: UDP-N-acetylenolpyruvoylglucosamine reductase (339 aa).

Residues 19–189 (VDVQARLFAE…LRVRFKLSRV (171 aa)) enclose the FAD-binding PCMH-type domain. Residue R166 is part of the active site. Residue S239 is the Proton donor of the active site. Residue E335 is part of the active site.

The protein belongs to the MurB family. FAD serves as cofactor.

Its subcellular location is the cytoplasm. It catalyses the reaction UDP-N-acetyl-alpha-D-muramate + NADP(+) = UDP-N-acetyl-3-O-(1-carboxyvinyl)-alpha-D-glucosamine + NADPH + H(+). The protein operates within cell wall biogenesis; peptidoglycan biosynthesis. Its function is as follows. Cell wall formation. This Pseudomonas syringae pv. syringae (strain B728a) protein is UDP-N-acetylenolpyruvoylglucosamine reductase.